The sequence spans 88 residues: UPF0335 protein NGR_c28390 (88 aa).

This sequence belongs to the UPF0335 family.

The protein is UPF0335 protein NGR_c28390 of Sinorhizobium fredii (strain NBRC 101917 / NGR234).